The primary structure comprises 192 residues: Ion-translocating oxidoreductase complex subunit A (192 aa).

6 helical membrane-spanning segments follow: residues 5–25 (ILLL…FLGL), 39–59 (IGMG…AYLV), 67–87 (LGIE…VVQF), 102–122 (LLGI…VALL), 134–154 (IIYG…FASM), and 171–191 (SIAM…TGLV).

It belongs to the NqrDE/RnfAE family. The complex is composed of six subunits: RnfA, RnfB, RnfC, RnfD, RnfE and RnfG.

It localises to the cell inner membrane. Functionally, part of a membrane-bound complex that couples electron transfer with translocation of ions across the membrane. This is Ion-translocating oxidoreductase complex subunit A from Vibrio campbellii (strain ATCC BAA-1116).